The following is a 193-amino-acid chain: Transmembrane protein 066L (193 aa).

Helical transmembrane passes span 14–34 and 48–68; these read VLFA…GLVW and LVVE…LVVV.

This sequence belongs to the IIV-6 357R family.

The protein localises to the membrane. This chain is Transmembrane protein 066L, found in Invertebrate iridescent virus 3 (IIV-3).